Reading from the N-terminus, the 373-residue chain is Histidinol-phosphate aminotransferase (373 aa).

Position 233 is an N6-(pyridoxal phosphate)lysine (Lys-233).

This sequence belongs to the class-II pyridoxal-phosphate-dependent aminotransferase family. Histidinol-phosphate aminotransferase subfamily. In terms of assembly, homodimer. Requires pyridoxal 5'-phosphate as cofactor.

The catalysed reaction is L-histidinol phosphate + 2-oxoglutarate = 3-(imidazol-4-yl)-2-oxopropyl phosphate + L-glutamate. It functions in the pathway amino-acid biosynthesis; L-histidine biosynthesis; L-histidine from 5-phospho-alpha-D-ribose 1-diphosphate: step 7/9. The sequence is that of Histidinol-phosphate aminotransferase from Nitratidesulfovibrio vulgaris (strain DP4) (Desulfovibrio vulgaris).